The following is an 843-amino-acid chain: MDNSAITSQSNPTPLVCSVTPIIVGSPPSPANVIELSSPSTPPTPLTLLASFSKTPSRKTTSPDSNGENTICHGVRQVRRVPRNNPGREKKSITGPSKEHKQRTRSPKTTTRREIKIVEGDRLIVGHDKREKKGATTKRMKKRDGVADKKLYARVSKVKSSENLDLDAKIPSSKVCNNTLPLVGDDMDNESSELQLEQAIKRRHDWTPAREVTTPVVDVAELHSSPCGKAVTRMHGVGTLLSDYGFSGVVETSLGTKSESFRNAPTTKRPMELQKFSTVPAIPTPTESSTTEDIQGSSSKQQRVKAKKPQKGKLTTITSHATAKYCVADQTVDLDYIQNVAPKSPGRKNISNRPSGMKHSNSGRGKSSTLKNDNGPPVFRVVPPLEAFKSFEGQELLFGTSSQLERGHPEYRCDETQDIQNSPSNSAAVSELAVPYRISSEGKNLGSSLFRLSGSKNLWSASARDLTGAVFEVDEIDFQEPSMGLSVLATKSRCHPGNRGPPRRNLVDVDNVPDKKLDIDTTEGENGNHSSVADNIVDRENLNPKISANTSETNLECAPRNKPAFSRFTTSELAKKVAAYGFKPIKSRDNMISLLERCWETQSKTFMPESKPNQGTDDARKNGFRKENHSDVRVRPDSATLANRRSPKKRQAKALSKFQEPNNFLPIENSTTTASMLPIEHVISSHTILINDDQLSDSVGETVSFLPTLDHNGNGTTLQENMLEIKSPATPNARHSRQRSSSTSFSIEPPSLASQITKAIKSQPRIRAFNGLKQPTWYEKILMYDPIQLEDLAAWLNTDGFGRIGEDREVGPGVVREWCESKGVCCVWKKQVSGRSHCLPMVS.

Disordered stretches follow at residues 26-111 (SPPS…KTTT), 281-313 (AIPT…QKGK), 339-377 (NVAP…NGPP), 603-655 (SKTF…AKAL), and 729-748 (ATPN…FSIE). Composition is skewed to polar residues over residues 50–69 (ASFS…NGEN) and 285–301 (PTES…SSKQ). Positions 302–311 (QRVKAKKPQK) are enriched in basic residues. Composition is skewed to polar residues over residues 349–372 (NISN…TLKN) and 603–616 (SKTF…NQGT). Over residues 617-636 (DDARKNGFRKENHSDVRVRP) the composition is skewed to basic and acidic residues. The span at 739-748 (RSSSTSFSIE) shows a compositional bias: low complexity.

It belongs to the SLX4 family. Forms a heterodimer with SLX1. Post-translationally, phosphorylated in response to DNA damage.

It is found in the nucleus. Functionally, regulatory subunit of the SLX1-SLX4 structure-specific endonuclease that resolves DNA secondary structures generated during DNA repair and recombination. Has endonuclease activity towards branched DNA substrates, introducing single-strand cuts in duplex DNA close to junctions with ss-DNA. The sequence is that of Structure-specific endonuclease subunit SLX4 from Ajellomyces capsulatus (strain G186AR / H82 / ATCC MYA-2454 / RMSCC 2432) (Darling's disease fungus).